The sequence spans 300 residues: 4-hydroxy-tetrahydrodipicolinate synthase (300 aa).

Position 56 (Thr56) interacts with pyruvate. The active-site Proton donor/acceptor is the Tyr145. Lys173 functions as the Schiff-base intermediate with substrate in the catalytic mechanism. Val215 contacts pyruvate.

Belongs to the DapA family. As to quaternary structure, homotetramer; dimer of dimers.

It localises to the cytoplasm. The enzyme catalyses L-aspartate 4-semialdehyde + pyruvate = (2S,4S)-4-hydroxy-2,3,4,5-tetrahydrodipicolinate + H2O + H(+). It functions in the pathway amino-acid biosynthesis; L-lysine biosynthesis via DAP pathway; (S)-tetrahydrodipicolinate from L-aspartate: step 3/4. In terms of biological role, catalyzes the condensation of (S)-aspartate-beta-semialdehyde [(S)-ASA] and pyruvate to 4-hydroxy-tetrahydrodipicolinate (HTPA). The polypeptide is 4-hydroxy-tetrahydrodipicolinate synthase (Prochlorococcus marinus (strain MIT 9301)).